The following is a 1093-amino-acid chain: Mediator of RNA polymerase II transcription subunit 14 (1093 aa).

Disordered stretches follow at residues 1–62 (MPGV…IDGH) and 1034–1065 (ETKS…ANDT). Residues 19–31 (DTQTPSNGDNLRN) show a composition bias toward polar residues. Positions 41–62 (KGDKDHDPDKESYAGKPRIDGH) are enriched in basic and acidic residues. The segment covering 1040 to 1056 (DYSTQPAPENQSQTGAP) has biased composition (polar residues).

This sequence belongs to the Mediator complex subunit 14 family. As to quaternary structure, component of the Mediator complex.

The protein localises to the nucleus. Its function is as follows. Component of the Mediator complex, a coactivator involved in the regulated transcription of nearly all RNA polymerase II-dependent genes. Mediator functions as a bridge to convey information from gene-specific regulatory proteins to the basal RNA polymerase II transcription machinery. Mediator is recruited to promoters by direct interactions with regulatory proteins and serves as a scaffold for the assembly of a functional preinitiation complex with RNA polymerase II and the general transcription factors. The sequence is that of Mediator of RNA polymerase II transcription subunit 14 (rgr1) from Aspergillus fumigatus (strain ATCC MYA-4609 / CBS 101355 / FGSC A1100 / Af293) (Neosartorya fumigata).